Consider the following 206-residue polypeptide: Small ribosomal subunit protein uS4 (206 aa).

In terms of domain architecture, S4 RNA-binding spans 96 to 157 (CRLDNVVYRM…KCRNQLRIAQ (62 aa)).

Belongs to the universal ribosomal protein uS4 family. Part of the 30S ribosomal subunit. Contacts protein S5. The interaction surface between S4 and S5 is involved in control of translational fidelity.

One of the primary rRNA binding proteins, it binds directly to 16S rRNA where it nucleates assembly of the body of the 30S subunit. In terms of biological role, with S5 and S12 plays an important role in translational accuracy. The chain is Small ribosomal subunit protein uS4 from Stutzerimonas stutzeri (strain A1501) (Pseudomonas stutzeri).